The sequence spans 378 residues: Odorant receptor 33a (378 aa).

At 1 to 33 (MDSRRKVRSENLYKTYWLYWRLLGVEGDYPFRR) the chain is on the cytoplasmic side. A helical transmembrane segment spans residues 34 to 54 (LVDFTITSFITILFPVHLILG). The Extracellular segment spans residues 55–62 (MYKKPQIQ). The chain crosses the membrane as a helical span at residues 63 to 83 (VFRSLHFTSECLFCSYKFFCF). The Cytoplasmic segment spans residues 84–127 (RWKLKEIKTIEGLLQDLDSRVESEEERNYFNQNPSRVARMLSKS). Residues 128–148 (YLVAAISAIITATVAGLFSTG) form a helical membrane-spanning segment. Topologically, residues 149–163 (RNLMYLGWFPYDFQA) are extracellular. A helical transmembrane segment spans residues 164–184 (TAAIYWISFSYQAIGSSLLIL). Residues 185–254 (ENLANDSYPP…LLRSTLHLSQ (70 aa)) lie on the Cytoplasmic side of the membrane. The chain crosses the membrane as a helical span at residues 255-275 (LGQFLSSGINISITLINILFF). Residues 276-285 (AENNFAMLYY) are Extracellular-facing. A helical transmembrane segment spans residues 286–306 (AVFFAAMLIELFPSCYYGILM). Residues 307–355 (TMEFDKLPYAIFSSNWLKMDKRYNRSLIILMQLTLVPVNIKAGGIVGID) are Cytoplasmic-facing. A helical transmembrane segment spans residues 356-376 (MSAFFATVRMAYSFYTLALSF). Topologically, residues 377–378 (RV) are extracellular.

This sequence belongs to the insect chemoreceptor superfamily. Heteromeric odorant receptor channel (TC 1.A.69) family. Or2a subfamily. Interacts with Orco. Complexes exist early in the endomembrane system in olfactory sensory neurons (OSNs), coupling these complexes to the conserved ciliary trafficking pathway. Expressed in 1-2 cells on the distal edge of the antenna but not the maxillary palp.

It is found in the cell membrane. In terms of biological role, odorant receptor which mediates acceptance or avoidance behavior, depending on its substrates. The odorant receptor repertoire encodes a large collection of odor stimuli that vary widely in identity, intensity, and duration. May form a complex with Orco to form odorant-sensing units, providing sensitive and prolonged odorant signaling and calcium permeability. The sequence is that of Odorant receptor 33a (Or33a) from Drosophila melanogaster (Fruit fly).